The sequence spans 273 residues: Undecaprenyl-diphosphatase (273 aa).

The next 7 helical transmembrane spans lie at 6-26 (SLLV…LPVS), 45-65 (AKTF…VMFW), 90-110 (LTLI…LLFH), 116-136 (LFNP…LIAA), 190-210 (YAAS…ATAL), 222-242 (GDIP…LVAI), and 252-272 (ISFI…YVVF).

It belongs to the UppP family.

Its subcellular location is the cell inner membrane. The enzyme catalyses di-trans,octa-cis-undecaprenyl diphosphate + H2O = di-trans,octa-cis-undecaprenyl phosphate + phosphate + H(+). Functionally, catalyzes the dephosphorylation of undecaprenyl diphosphate (UPP). Confers resistance to bacitracin. The polypeptide is Undecaprenyl-diphosphatase (Escherichia fergusonii (strain ATCC 35469 / DSM 13698 / CCUG 18766 / IAM 14443 / JCM 21226 / LMG 7866 / NBRC 102419 / NCTC 12128 / CDC 0568-73)).